A 179-amino-acid polypeptide reads, in one-letter code: Large ribosomal subunit protein uL5 (179 aa).

It belongs to the universal ribosomal protein uL5 family. As to quaternary structure, part of the 50S ribosomal subunit; part of the 5S rRNA/L5/L18/L25 subcomplex. Contacts the 5S rRNA and the P site tRNA. Forms a bridge to the 30S subunit in the 70S ribosome.

Its function is as follows. This is one of the proteins that bind and probably mediate the attachment of the 5S RNA into the large ribosomal subunit, where it forms part of the central protuberance. In the 70S ribosome it contacts protein S13 of the 30S subunit (bridge B1b), connecting the 2 subunits; this bridge is implicated in subunit movement. Contacts the P site tRNA; the 5S rRNA and some of its associated proteins might help stabilize positioning of ribosome-bound tRNAs. The sequence is that of Large ribosomal subunit protein uL5 from Shouchella clausii (strain KSM-K16) (Alkalihalobacillus clausii).